Here is a 270-residue protein sequence, read N- to C-terminus: Molybdenum storage protein subunit beta (270 aa).

As to quaternary structure, octamer consisting of 4 alpha and 4 beta chains.

Its subcellular location is the cytoplasm. Intracellular storage of molybdenum. Binds polyoxomolybdates. Can bind at least 90 molybdenum atoms per protein molecule. This Azotobacter vinelandii (strain DJ / ATCC BAA-1303) protein is Molybdenum storage protein subunit beta.